A 426-amino-acid polypeptide reads, in one-letter code: Zinc finger CCCH domain-containing protein 13 (426 aa).

The segment at 10–36 (AYKTKLCALWQRGNCNRDTCSFAHGHG) adopts a C3H1-type zinc-finger fold. Disordered regions lie at residues 34 to 155 (GHGD…HEKQ), 253 to 317 (NEEG…DKTS), and 390 to 426 (NDAD…VDVE). 3 stretches are compositionally biased toward basic and acidic residues: residues 54–70 (RRDY…DRRF), 78–101 (PGRE…RDSS), and 108–120 (RKSE…KTDD). The span at 124 to 133 (NSSRSLSLSD) shows a compositional bias: low complexity. Residues 135-155 (NDEKKKDKFSSGDEKEDHEKQ) show a composition bias toward basic and acidic residues. Residues 144–245 (SSGDEKEDHE…FERLGDLLAS (102 aa)) are a coiled coil. Positions 255-272 (EGSSVNEDLNERSPNTAA) are enriched in polar residues. Basic and acidic residues predominate over residues 284–317 (EEAKAVKKRRERDSDTMTRSDKYRSDVTDFDKTS). The span at 416–426 (YEGDDEEVDVE) shows a compositional bias: acidic residues.

The polypeptide is Zinc finger CCCH domain-containing protein 13 (Oryza sativa subsp. japonica (Rice)).